A 421-amino-acid chain; its full sequence is CinA-like protein (421 aa).

Belongs to the CinA family.

This Synechococcus sp. (strain ATCC 27144 / PCC 6301 / SAUG 1402/1) (Anacystis nidulans) protein is CinA-like protein.